We begin with the raw amino-acid sequence, 105 residues long: Cortistatin (105 aa).

The signal sequence occupies residues 1–18 (MPLSPGLLLLLLSGATAT). The propeptide occupies 19–74 (AALPLEGGPTGRDSEHMQEAAGIRKSSLLTFLAWWFEWTSQASAGPLIGEEAREVA). A disulfide bond links Cys93 and Cys104.

Belongs to the somatostatin family. In terms of tissue distribution, expressed in a subset of GABAergic cells in the cortex and hippocampus.

The protein resides in the secreted. Its function is as follows. Binds to all human somatostatin receptor (SSTR) subtypes. It also inhibits cAMP production induced by forskolin through SSTRs. This Homo sapiens (Human) protein is Cortistatin (CORT).